The primary structure comprises 278 residues: Indole-3-glycerol phosphate synthase (278 aa).

This sequence belongs to the TrpC family.

The catalysed reaction is 1-(2-carboxyphenylamino)-1-deoxy-D-ribulose 5-phosphate + H(+) = (1S,2R)-1-C-(indol-3-yl)glycerol 3-phosphate + CO2 + H2O. It functions in the pathway amino-acid biosynthesis; L-tryptophan biosynthesis; L-tryptophan from chorismate: step 4/5. This chain is Indole-3-glycerol phosphate synthase, found in Pseudomonas fluorescens (strain SBW25).